Reading from the N-terminus, the 333-residue chain is Atrochrysone carboxyl ACP thioesterase MYCFIDRAFT_190111 (333 aa).

Zn(2+)-binding residues include histidine 108, histidine 110, aspartate 112, and histidine 113. Residue aspartate 112 is the Proton donor/acceptor of the active site.

This sequence belongs to the metallo-beta-lactamase superfamily. It depends on Zn(2+) as a cofactor.

The catalysed reaction is atrochrysone carboxyl-[ACP] + H2O = atrochrysone carboxylate + holo-[ACP] + H(+). It participates in secondary metabolite biosynthesis. Its function is as follows. Atrochrysone carboxyl ACP thioesterase; part of the gene cluster that mediates the biosynthesis of an emodin derivative that may be involved in black Sigatoka disease of banana. The pathway begins with the synthesis of atrochrysone thioester by the polyketide synthase PKS8-1. The atrochrysone carboxyl ACP thioesterase MYCFIDRAFT_190111 then breaks the thioester bond and releases the atrochrysone carboxylic acid from PKS8-1. The decarboxylase MYCFIDRAFT_34057 then catalyzes the concerted decarboxylation-elimination required to convert atochrysone carboxylic acid into emodin anthrone, which is further oxidized to emodin by the anthrone oxygenase MYCFIDRAFT_34418. The functions of the other tailoring enzymes as well as the final product of the cluster have still to be identified. The polypeptide is Atrochrysone carboxyl ACP thioesterase MYCFIDRAFT_190111 (Pseudocercospora fijiensis (strain CIRAD86) (Black leaf streak disease fungus)).